Consider the following 298-residue polypeptide: N-acetylmuramic acid 6-phosphate etherase (298 aa).

The region spanning 55–218 is the SIS domain; sequence IHAQVSGGGR…STGLMIKSGK (164 aa). The active-site Proton donor is the E83. E114 is a catalytic residue.

This sequence belongs to the GCKR-like family. MurNAc-6-P etherase subfamily. In terms of assembly, homodimer.

The enzyme catalyses N-acetyl-D-muramate 6-phosphate + H2O = N-acetyl-D-glucosamine 6-phosphate + (R)-lactate. The protein operates within amino-sugar metabolism; 1,6-anhydro-N-acetylmuramate degradation. Its pathway is amino-sugar metabolism; N-acetylmuramate degradation. It functions in the pathway cell wall biogenesis; peptidoglycan recycling. In terms of biological role, specifically catalyzes the cleavage of the D-lactyl ether substituent of MurNAc 6-phosphate, producing GlcNAc 6-phosphate and D-lactate. Together with AnmK, is also required for the utilization of anhydro-N-acetylmuramic acid (anhMurNAc) either imported from the medium or derived from its own cell wall murein, and thus plays a role in cell wall recycling. This is N-acetylmuramic acid 6-phosphate etherase from Shigella flexneri.